A 219-amino-acid chain; its full sequence is Sugar fermentation stimulation protein homolog (219 aa).

This sequence belongs to the SfsA family.

This Archaeoglobus fulgidus (strain ATCC 49558 / DSM 4304 / JCM 9628 / NBRC 100126 / VC-16) protein is Sugar fermentation stimulation protein homolog.